Reading from the N-terminus, the 619-residue chain is Alpha-L-arabinofuranosidase C (619 aa).

Residues 1 to 37 (MINHNKTPNILAKVFKRTCGLVSTGAALAILSQAASA) form the signal peptide. The CBM2 domain occupies 38–136 (ACTYTIDSEW…TVTGAACNSA (99 aa)). Cysteines 39 and 133 form a disulfide. The 127-residue stretch at 163–289 (LLQEAQAGFC…LPNIDSLSVV (127 aa)) folds into the CBM6 domain. The segment at 300 to 319 (SVSSSSSVQSSSSSSSTPSQ) is disordered.

This sequence belongs to the glycosyl hydrolase 62 family.

Its subcellular location is the secreted. The catalysed reaction is Hydrolysis of terminal non-reducing alpha-L-arabinofuranoside residues in alpha-L-arabinosides.. It functions in the pathway glycan metabolism; hemicellulose degradation. Functionally, xylanase C contributes to hydrolyze hemicellulose, the major component of plant cell-walls. This chain is Alpha-L-arabinofuranosidase C (xynC), found in Cellvibrio japonicus (strain Ueda107) (Pseudomonas fluorescens subsp. cellulosa).